We begin with the raw amino-acid sequence, 220 residues long: MDAPERLMPREKMLKSGIGSLTDVELLALFLRTGVPGKDVMALAHETLQRSGSLYGLLSADFAQFRGTGIGIAKYAQLKGIAELARRYYKARMMKENALLSPEMTREFLQSQLTGEEREIFLVIFLDARHRVIKHSRLFSGTLNHVEVHPREIIREAIKLNASAVILAHNHPSGCAEPSKADKLITERVVKCCQFMDIRVLDHLVIGRGEYVSFAERGWI.

Positions 98–220 constitute an MPN domain; sequence ALLSPEMTRE…YVSFAERGWI (123 aa). Zn(2+)-binding residues include His169, His171, and Asp182. The JAMM motif signature appears at 169–182; sequence HNHPSGCAEPSKAD.

It belongs to the UPF0758 family. YicR subfamily.

The polypeptide is UPF0758 protein CKO_05095 (Citrobacter koseri (strain ATCC BAA-895 / CDC 4225-83 / SGSC4696)).